The following is a 276-amino-acid chain: UPF0328 protein ECU03_0010 (276 aa).

Disordered stretches follow at residues methionine 1–serine 132 and serine 156–histidine 176. Over residues histidine 106–threonine 126 the composition is skewed to basic and acidic residues.

Belongs to the UPF0328 family.

In Encephalitozoon cuniculi (strain GB-M1) (Microsporidian parasite), this protein is UPF0328 protein ECU03_0010.